A 650-amino-acid chain; its full sequence is ATP-dependent DNA helicase PIF1 (650 aa).

The tract at residues 14 to 192 (MPSSTEAATD…ALEKRPMESQ (179 aa)) is PINT. 2 positions are modified to phosphoserine: Ser-40 and Ser-164. Residues 171 to 199 (LQRAAATKAPDSALEKRPMESQTSTEAPR) are disordered. 237–244 (GSAGTGKS) serves as a coordination point for ATP. The DNA-binding element occupies 586–605 (QAYVALSRARSLQGLRVLDF). The segment at 631 to 650 (LESQDDEEANSDLENMDPNL) is disordered. Over residues 633-650 (SQDDEEANSDLENMDPNL) the composition is skewed to acidic residues.

This sequence belongs to the helicase family. PIF1 subfamily. As to quaternary structure, monomer. Interacts with telomerase. Mg(2+) is required as a cofactor.

It localises to the nucleus. The protein localises to the mitochondrion. It carries out the reaction Couples ATP hydrolysis with the unwinding of duplex DNA at the replication fork by translocating in the 5'-3' direction. This creates two antiparallel DNA single strands (ssDNA). The leading ssDNA polymer is the template for DNA polymerase III holoenzyme which synthesizes a continuous strand.. The catalysed reaction is ATP + H2O = ADP + phosphate + H(+). In terms of biological role, DNA-dependent ATPase and 5'-3' DNA helicase required for the maintenance of both mitochondrial and nuclear genome stability. Efficiently unwinds G-quadruplex (G4) DNA structures and forked RNA-DNA hybrids. Resolves G4 structures, preventing replication pausing and double-strand breaks (DSBs) at G4 motifs. Involved in the maintenance of telomeric DNA. Inhibits telomere elongation, de novo telomere formation and telomere addition to DSBs via catalytic inhibition of telomerase. Reduces the processivity of telomerase by displacing active telomerase from DNA ends. Releases telomerase by unwinding the short telomerase RNA/telomeric DNA hybrid that is the intermediate in the telomerase reaction. Possesses an intrinsic strand annealing activity. This Mus musculus (Mouse) protein is ATP-dependent DNA helicase PIF1.